The following is a 126-amino-acid chain: MIAGIGTDIVAVVRLERALERHGERFAQRILAPTELLNFREGGATAAFLARRFAAKEAASKALGTGFSDGVTLRDLEVVHDVRGQPSLRFHGAAAERAVALGVSEAALSLSDEREYAVAFVILVTG.

2 residues coordinate Mg(2+): Asp-8 and Glu-57.

It belongs to the P-Pant transferase superfamily. AcpS family. Mg(2+) is required as a cofactor.

It is found in the cytoplasm. It carries out the reaction apo-[ACP] + CoA = holo-[ACP] + adenosine 3',5'-bisphosphate + H(+). Its function is as follows. Transfers the 4'-phosphopantetheine moiety from coenzyme A to a Ser of acyl-carrier-protein. This is Holo-[acyl-carrier-protein] synthase from Halorhodospira halophila (strain DSM 244 / SL1) (Ectothiorhodospira halophila (strain DSM 244 / SL1)).